A 533-amino-acid polypeptide reads, in one-letter code: Probable G-protein coupled receptor Mth-like 14 (533 aa).

Residues 1–23 form the signal peptide; that stretch reads MNLGHWNFLLALISLQTFFNASA. N-linked (GlcNAc...) asparagine glycans are attached at residues Asn20, Asn29, Asn30, Asn36, and Asn47. Over 24 to 242 the chain is Extracellular; it reads QISTVNNSSK…QVEEQIAFAK (219 aa). Positions 86–108 are disordered; it reads VQSPVDNPLDPADCSQREKYRKQ. A disulfide bridge connects residues Cys120 and Cys216. N-linked (GlcNAc...) asparagine glycans are attached at residues Asn133, Asn178, and Asn206. Residues 243–263 form a helical membrane-spanning segment; the sequence is VVFVAVLMLISMPCLLLVSYL. At 264-279 the chain is on the cytoplasmic side; sequence HMTLRLLRNLHGLSLS. A helical membrane pass occupies residues 280–300; that stretch reads LMSLCLASGYFVHSVVHIYGI. At 301–303 the chain is on the extracellular side; it reads PNQ. The helical transmembrane segment at 304-324 threads the bilayer; it reads GFIGYVIQFCILSYFFWYLCI. The Cytoplasmic segment spans residues 325 to 347; the sequence is CFNVLLNVWYKLPCCIQCSKSWA. A helical transmembrane segment spans residues 348-368; the sequence is TFNFACYAVFAFSGPATIVAL. The Extracellular portion of the chain corresponds to 369 to 395; sequence TVQKGLPGMPSYFLQGLTESIRDSQRY. The chain crosses the membrane as a helical span at residues 396 to 416; it reads FIPPVSTILFLSFLLNIISFF. Residues 417-451 are Cytoplasmic-facing; it reads GFQRISGYAKAEKNIQERKCLFDQQKYEDVKKDAK. A helical membrane pass occupies residues 452 to 472; it reads CVSLLGIIMVVSWLLEIITFY. Topologically, residues 473–480 are extracellular; that stretch reads SGSNSNYL. The helical transmembrane segment at 481–501 threads the bilayer; sequence ILCDMVNGLQGVWVLLIFLVV. The Cytoplasmic segment spans residues 502–533; it reads RRRRTIILRWWYDRGSHEIEGTELQALSNSPT.

Belongs to the G-protein coupled receptor 2 family. Mth subfamily.

Its subcellular location is the cell membrane. In Drosophila melanogaster (Fruit fly), this protein is Probable G-protein coupled receptor Mth-like 14 (mthl14).